We begin with the raw amino-acid sequence, 446 residues long: uncharacterized protein (446 aa).

Helical transmembrane passes span 20–40 (LIGVGCTIGTGFFLGSSIAIV), 42–62 (SGFSVLLSFLIAGIGTYFVFE), 95–115 (WVYWTSEMLITGSQLTAISLF), 127–147 (VFASIYAVLGLLIIFTGLSVF), 160–180 (AAIFMFIVIAILALCGILSGG), 205–225 (LIYAFYAFGGIEVMGLMAVHL), 237–257 (LMLATLAIIYIISIGLALLLV), 284–304 (IFNGIFIIAGFSTLVASLFAV), 331–351 (WPALGLTFAGLVLSIILSLVL), 355–375 (IYEHMTTAAGLMLLYTWLFIL), 388–408 (GKTQIYLAMVLIAAAVSGTLF), and 414–434 (PGFFVSIGFLVIIAIVTMIYQ).

The protein belongs to the amino acid-polyamine-organocation (APC) superfamily.

It is found in the cell membrane. This is an uncharacterized protein from Bacillus subtilis (strain 168).